A 330-amino-acid polypeptide reads, in one-letter code: Phenylalanine--tRNA ligase alpha subunit (330 aa).

Glu246 lines the Mg(2+) pocket.

This sequence belongs to the class-II aminoacyl-tRNA synthetase family. Phe-tRNA synthetase alpha subunit type 1 subfamily. Tetramer of two alpha and two beta subunits. The cofactor is Mg(2+).

The protein localises to the cytoplasm. The enzyme catalyses tRNA(Phe) + L-phenylalanine + ATP = L-phenylalanyl-tRNA(Phe) + AMP + diphosphate + H(+). In Campylobacter jejuni subsp. jejuni serotype O:6 (strain 81116 / NCTC 11828), this protein is Phenylalanine--tRNA ligase alpha subunit.